The chain runs to 638 residues: Zinc finger protein 143 (638 aa).

Residue Met-1 is modified to N-acetylmethionine. A Glycyl lysine isopeptide (Lys-Gly) (interchain with G-Cter in SUMO2) cross-link involves residue Lys-213. 4 C2H2-type zinc fingers span residues Phe-237–His-261, Tyr-267–His-291, Tyr-297–His-321, and Phe-327–His-351. Thr-352 is subject to Phosphothreonine. 3 consecutive C2H2-type zinc fingers follow at residues Tyr-357 to His-381, Tyr-387 to His-411, and Tyr-417 to His-440. Lys-406 is covalently cross-linked (Glycyl lysine isopeptide (Lys-Gly) (interchain with G-Cter in SUMO2)).

Belongs to the GLI C2H2-type zinc-finger protein family. Interacts with CHD8. Forms a complex with HCFC1 and ZNF143.

It is found in the nucleus. Transcriptional activator. In complex with HCFC1 and ZNF143, regulates the expression of several genes, including AP2S1, ESCO2, OPHN1, RBL1, UBXN8 and ZNF32. Activates the gene for selenocysteine tRNA (tRNAsec). Binds to the SPH motif of small nuclear RNA (snRNA) gene promoters. Participates in efficient U6 RNA polymerase III transcription via its interaction with CHD8. This Rattus norvegicus (Rat) protein is Zinc finger protein 143 (Znf143).